The chain runs to 449 residues: NADH-quinone oxidoreductase subunit D (449 aa).

This sequence belongs to the complex I 49 kDa subunit family. NDH-1 is composed of 14 different subunits. Subunits NuoB, C, D, E, F, and G constitute the peripheral sector of the complex.

It is found in the cell membrane. The enzyme catalyses a quinone + NADH + 5 H(+)(in) = a quinol + NAD(+) + 4 H(+)(out). Functionally, NDH-1 shuttles electrons from NADH, via FMN and iron-sulfur (Fe-S) centers, to quinones in the respiratory chain. The immediate electron acceptor for the enzyme in this species is believed to be a menaquinone. Couples the redox reaction to proton translocation (for every two electrons transferred, four hydrogen ions are translocated across the cytoplasmic membrane), and thus conserves the redox energy in a proton gradient. The sequence is that of NADH-quinone oxidoreductase subunit D from Saccharopolyspora erythraea (strain ATCC 11635 / DSM 40517 / JCM 4748 / NBRC 13426 / NCIMB 8594 / NRRL 2338).